Reading from the N-terminus, the 351-residue chain is Prostaglandin reductase 2 (351 aa).

Position 99 to 100 (99 to 100 (FY)) interacts with substrate. NADP(+) is bound by residues 165-168 (GACG), K192, Y208, N231, 253-259 (CGQISQY), 287-289 (FLV), and N337. 288-290 (LVL) contacts substrate.

Belongs to the NADP-dependent oxidoreductase L4BD family. In terms of assembly, monomer.

It is found in the cytoplasm. It catalyses the reaction 13,14-dihydro-15-oxo-prostaglandin E2 + NAD(+) = 15-oxoprostaglandin E2 + NADH + H(+). The catalysed reaction is 13,14-dihydro-15-oxo-prostaglandin E2 + NADP(+) = 15-oxoprostaglandin E2 + NADPH + H(+). The enzyme catalyses 13,14-dihydro-15-oxo-PGF2alpha + NADP(+) = 15-oxoprostaglandin F2alpha + NADPH + H(+). It carries out the reaction 13,14-dihydro-15-oxo-prostaglandin E1 + NADP(+) = 15-oxoprostaglandin E1 + NADPH + H(+). It catalyses the reaction 13,14-dihydro-15-oxo-prostaglandin F1alpha + NADP(+) = 15-oxoprostaglandin F1alpha + NADPH + H(+). Functionally, functions as 15-oxo-prostaglandin 13-reductase and acts on 15-keto-PGE1, 15-keto-PGE2, 15-keto-PGE1-alpha and 15-keto-PGE2-alpha with highest activity towards 15-keto-PGE2. Overexpression represses transcriptional activity of PPARG and inhibits adipocyte differentiation. The polypeptide is Prostaglandin reductase 2 (PTGR2) (Bos taurus (Bovine)).